We begin with the raw amino-acid sequence, 345 residues long: MGGNSQPHQEPRRVNNDPRAKQQKGNQVRRDRRDVHGWVVLDKPIGMTSTQAVAVLKRLFNAKRAGHAGTLDPLASGGLPIALGEATKTVPFVMDGRKRYQFTVCWGEERDTDDIEGRVTATSELRPTREAILALLPRFTGVIEQIPPRYSAIKIQGERAYDLARDGEVVELAPRPVEIHRLTLVDQPDNDRAVFEAECGKGTYVRALARDMGRILGTYGHICALRRTLVGPFGENDMIPLDQLEALCDRAASGEGSLADALLPVETALDDIPALAVTRADAARLHRGQAVLLRGRDAPTCSGTVYVTVAGRLLALAEVGNGEIIPKRVFNLTGLTASPGRNERN.

The interval 1–33 (MGGNSQPHQEPRRVNNDPRAKQQKGNQVRRDRR) is disordered. Basic and acidic residues predominate over residues 9–20 (QEPRRVNNDPRA). Catalysis depends on D72, which acts as the Nucleophile.

Belongs to the pseudouridine synthase TruB family. Type 1 subfamily.

The enzyme catalyses uridine(55) in tRNA = pseudouridine(55) in tRNA. Responsible for synthesis of pseudouridine from uracil-55 in the psi GC loop of transfer RNAs. The protein is tRNA pseudouridine synthase B of Bradyrhizobium diazoefficiens (strain JCM 10833 / BCRC 13528 / IAM 13628 / NBRC 14792 / USDA 110).